Reading from the N-terminus, the 555-residue chain is Pentatricopeptide repeat-containing protein At2g44880 (555 aa).

PPR repeat units lie at residues 41-75 (DSFL…TCFA), 77-111 (DNFT…GFCA), 112-142 (DMYV…MPHR), 143-173 (SEVS…MPHV), 175-205 (DVVI…MTHK), 206-240 (TVIT…NLVS), 241-267 (WNTM…MQAT), 273-307 (DDVT…KLDK), 308-342 (KVKV…QVAS), 343-370 (WNAM…MIEE), 373-407 (DEIT…GLNA), and 408-438 (KIEH…MPFE). Residues 443–518 (ILSSFLSACG…EVGCSLIEIN (76 aa)) are type E motif. A type E(+) motif region spans residues 519–549 (YIVSEFISGDTTHPHRRSIHLVLGDLLMHMN).

Belongs to the PPR family. PCMP-E subfamily.

This Arabidopsis thaliana (Mouse-ear cress) protein is Pentatricopeptide repeat-containing protein At2g44880 (PCMP-E9).